A 457-amino-acid polypeptide reads, in one-letter code: ATP synthase subunit beta (457 aa).

Position 150 to 157 (150 to 157 (GGAGVGKT)) interacts with ATP.

Belongs to the ATPase alpha/beta chains family. F-type ATPases have 2 components, CF(1) - the catalytic core - and CF(0) - the membrane proton channel. CF(1) has five subunits: alpha(3), beta(3), gamma(1), delta(1), epsilon(1). CF(0) has three main subunits: a(1), b(2) and c(9-12). The alpha and beta chains form an alternating ring which encloses part of the gamma chain. CF(1) is attached to CF(0) by a central stalk formed by the gamma and epsilon chains, while a peripheral stalk is formed by the delta and b chains.

The protein localises to the cell membrane. The enzyme catalyses ATP + H2O + 4 H(+)(in) = ADP + phosphate + 5 H(+)(out). Its function is as follows. Produces ATP from ADP in the presence of a proton gradient across the membrane. The catalytic sites are hosted primarily by the beta subunits. The polypeptide is ATP synthase subunit beta (Baumannia cicadellinicola subsp. Homalodisca coagulata).